The primary structure comprises 909 residues: Villin-1 (909 aa).

Gelsolin-like repeat units lie at residues 29–79 (KQLI…VDSI), 149–189 (VRVK…QEKA), 262–305 (GNLH…TERK), 391–448 (LKVW…QDRA), 529–569 (MQAI…SDHE), and 631–672 (LKVK…KSKE). Disordered regions lie at residues 733–781 (SLKG…CSSE) and 816–835 (DGVA…QKPR). Basic and acidic residues predominate over residues 752-762 (QSKDNASRDLQ). Ser780 is subject to Phosphoserine. One can recognise an HP domain in the interval 844-909 (SLESLAYSYE…NKLKISLHLF (66 aa)).

The protein belongs to the villin/gelsolin family. Expressed in all tissues examined. Mainly detected in the vascular tissue and the pericycle of roots and in the vasculature of leaves. Not expressed in the root cap.

The protein resides in the cytoplasm. The protein localises to the cytoskeleton. Binds actin and actin filament bundles in a Ca(2+)/calmodulin-insensitive manner, but is unable to sever, cap, and nucleate actin filament formation in vitro. Does not protect individual filaments from severing by VLN3 (AC O81645). This chain is Villin-1, found in Arabidopsis thaliana (Mouse-ear cress).